Reading from the N-terminus, the 220-residue chain is 1-Cys peroxiredoxin A (220 aa).

A Thioredoxin domain is found at 4–165; that stretch reads LTIGDTVPNL…VVRAVDALQT (162 aa). The Cysteine sulfenic acid (-SOH) intermediate role is filled by Cys46. The Bipartite nuclear localization signal motif lies at 195–218; the sequence is KEKFPQGFDTADLPSGKGYLRFTK.

The protein belongs to the peroxiredoxin family. Prx6 subfamily.

It localises to the nucleus. Its subcellular location is the cytoplasm. The catalysed reaction is a hydroperoxide + [thioredoxin]-dithiol = an alcohol + [thioredoxin]-disulfide + H2O. In terms of biological role, thiol-specific peroxidase that catalyzes the reduction of hydrogen peroxide and organic hydroperoxides to water and alcohols, respectively. Seems to contribute to the inhibition of germination during stress. This Oryza sativa subsp. japonica (Rice) protein is 1-Cys peroxiredoxin A.